A 326-amino-acid polypeptide reads, in one-letter code: tRNA(Ile)-lysidine synthase (326 aa).

23–28 (SGGVDS) is an ATP binding site.

It belongs to the tRNA(Ile)-lysidine synthase family.

Its subcellular location is the cytoplasm. It carries out the reaction cytidine(34) in tRNA(Ile2) + L-lysine + ATP = lysidine(34) in tRNA(Ile2) + AMP + diphosphate + H(+). Functionally, ligates lysine onto the cytidine present at position 34 of the AUA codon-specific tRNA(Ile) that contains the anticodon CAU, in an ATP-dependent manner. Cytidine is converted to lysidine, thus changing the amino acid specificity of the tRNA from methionine to isoleucine. The chain is tRNA(Ile)-lysidine synthase from Wolinella succinogenes (strain ATCC 29543 / DSM 1740 / CCUG 13145 / JCM 31913 / LMG 7466 / NCTC 11488 / FDC 602W) (Vibrio succinogenes).